Here is a 256-residue protein sequence, read N- to C-terminus: Enolase-phosphatase E1 (256 aa).

Asp-14 and Glu-16 together coordinate Mg(2+). Substrate contacts are provided by residues 142 to 143 and Lys-176; that span reads SS. Mg(2+) is bound at residue Asp-201.

This sequence belongs to the HAD-like hydrolase superfamily. MasA/MtnC family. In terms of assembly, monomer. It depends on Mg(2+) as a cofactor.

It is found in the cytoplasm. The protein resides in the nucleus. It catalyses the reaction 5-methylsulfanyl-2,3-dioxopentyl phosphate + H2O = 1,2-dihydroxy-5-(methylsulfanyl)pent-1-en-3-one + phosphate. It functions in the pathway amino-acid biosynthesis; L-methionine biosynthesis via salvage pathway; L-methionine from S-methyl-5-thio-alpha-D-ribose 1-phosphate: step 3/6. Its pathway is amino-acid biosynthesis; L-methionine biosynthesis via salvage pathway; L-methionine from S-methyl-5-thio-alpha-D-ribose 1-phosphate: step 4/6. In terms of biological role, bifunctional enzyme that catalyzes the enolization of 2,3-diketo-5-methylthiopentyl-1-phosphate (DK-MTP-1-P) into the intermediate 2-hydroxy-3-keto-5-methylthiopentenyl-1-phosphate (HK-MTPenyl-1-P), which is then dephosphorylated to form the acireductone 1,2-dihydroxy-3-keto-5-methylthiopentene (DHK-MTPene). The chain is Enolase-phosphatase E1 from Drosophila melanogaster (Fruit fly).